The chain runs to 212 residues: Thiamine-phosphate synthase (212 aa).

4-amino-2-methyl-5-(diphosphooxymethyl)pyrimidine contacts are provided by residues 40 to 44 and N75; that span reads QFREK. The Mg(2+) site is built by D76 and D95. S113 serves as a coordination point for 4-amino-2-methyl-5-(diphosphooxymethyl)pyrimidine. Residue 139 to 141 coordinates 2-[(2R,5Z)-2-carboxy-4-methylthiazol-5(2H)-ylidene]ethyl phosphate; it reads TIS. K142 is a binding site for 4-amino-2-methyl-5-(diphosphooxymethyl)pyrimidine. 2-[(2R,5Z)-2-carboxy-4-methylthiazol-5(2H)-ylidene]ethyl phosphate is bound by residues G171 and 191 to 192; that span reads IS.

This sequence belongs to the thiamine-phosphate synthase family. Mg(2+) serves as cofactor.

It catalyses the reaction 2-[(2R,5Z)-2-carboxy-4-methylthiazol-5(2H)-ylidene]ethyl phosphate + 4-amino-2-methyl-5-(diphosphooxymethyl)pyrimidine + 2 H(+) = thiamine phosphate + CO2 + diphosphate. The enzyme catalyses 2-(2-carboxy-4-methylthiazol-5-yl)ethyl phosphate + 4-amino-2-methyl-5-(diphosphooxymethyl)pyrimidine + 2 H(+) = thiamine phosphate + CO2 + diphosphate. It carries out the reaction 4-methyl-5-(2-phosphooxyethyl)-thiazole + 4-amino-2-methyl-5-(diphosphooxymethyl)pyrimidine + H(+) = thiamine phosphate + diphosphate. It functions in the pathway cofactor biosynthesis; thiamine diphosphate biosynthesis; thiamine phosphate from 4-amino-2-methyl-5-diphosphomethylpyrimidine and 4-methyl-5-(2-phosphoethyl)-thiazole: step 1/1. Functionally, condenses 4-methyl-5-(beta-hydroxyethyl)thiazole monophosphate (THZ-P) and 2-methyl-4-amino-5-hydroxymethyl pyrimidine pyrophosphate (HMP-PP) to form thiamine monophosphate (TMP). The polypeptide is Thiamine-phosphate synthase (Staphylococcus haemolyticus (strain JCSC1435)).